The sequence spans 136 residues: NADPH-dependent 7-cyano-7-deazaguanine reductase (136 aa).

Catalysis depends on Cys53, which acts as the Thioimide intermediate. Catalysis depends on Asp60, which acts as the Proton donor. Residues 75-77 and 94-95 contribute to the substrate site; these read VEL and HE.

It belongs to the GTP cyclohydrolase I family. QueF type 1 subfamily.

It is found in the cytoplasm. The enzyme catalyses 7-aminomethyl-7-carbaguanine + 2 NADP(+) = 7-cyano-7-deazaguanine + 2 NADPH + 3 H(+). It participates in tRNA modification; tRNA-queuosine biosynthesis. Functionally, catalyzes the NADPH-dependent reduction of 7-cyano-7-deazaguanine (preQ0) to 7-aminomethyl-7-deazaguanine (preQ1). The polypeptide is NADPH-dependent 7-cyano-7-deazaguanine reductase (Trichormus variabilis (strain ATCC 29413 / PCC 7937) (Anabaena variabilis)).